The primary structure comprises 217 residues: Superoxide dismutase [Cu-Zn], chloroplastic (217 aa).

The N-terminal 63 residues, 1–63 (MAAHSIFTTT…TTPKPLTVFA (63 aa)), are a transit peptide targeting the chloroplast. Cu cation-binding residues include H109, H111, and H126. The cysteines at positions 120 and 209 are disulfide-linked. 4 residues coordinate Zn(2+): H126, H134, H143, and D146. H183 contributes to the Cu cation binding site.

This sequence belongs to the Cu-Zn superoxide dismutase family. Homotetramer. Cu cation is required as a cofactor. Zn(2+) serves as cofactor.

The protein resides in the plastid. It is found in the chloroplast. The catalysed reaction is 2 superoxide + 2 H(+) = H2O2 + O2. Its function is as follows. Destroys radicals which are normally produced within the cells and which are toxic to biological systems. This Solanum lycopersicum (Tomato) protein is Superoxide dismutase [Cu-Zn], chloroplastic (SODCP.2).